The primary structure comprises 448 residues: Cytoplasmic tRNA 2-thiolation protein 2 (448 aa).

The protein belongs to the CTU2/NCS2 family.

It localises to the cytoplasm. It functions in the pathway tRNA modification; 5-methoxycarbonylmethyl-2-thiouridine-tRNA biosynthesis. Plays a central role in 2-thiolation of mcm(5)S(2)U at tRNA wobble positions of tRNA(Lys), tRNA(Glu) and tRNA(Gln). May act by forming a heterodimer with NCS6 that ligates sulfur from thiocarboxylated URM1 onto the uridine of tRNAs at wobble position. Prior mcm(5) tRNA modification by the elongator complex is required for 2-thiolation. May also be involved in protein urmylation. This Scheffersomyces stipitis (strain ATCC 58785 / CBS 6054 / NBRC 10063 / NRRL Y-11545) (Yeast) protein is Cytoplasmic tRNA 2-thiolation protein 2.